Here is a 285-residue protein sequence, read N- to C-terminus: Eukaryotic translation initiation factor 3 subunit F-2 (285 aa).

An MPN domain is found at 11-145 (VVLQPLVLFQ…TRLYCGVEMG (135 aa)).

This sequence belongs to the eIF-3 subunit F family. As to quaternary structure, component of the eukaryotic translation initiation factor 3 (eIF-3) complex. The eIF-3 complex interacts with pix.

The protein resides in the cytoplasm. Its function is as follows. Component of the eukaryotic translation initiation factor 3 (eIF-3) complex, which is involved in protein synthesis of a specialized repertoire of mRNAs and, together with other initiation factors, stimulates binding of mRNA and methionyl-tRNAi to the 40S ribosome. The eIF-3 complex specifically targets and initiates translation of a subset of mRNAs involved in cell proliferation. The polypeptide is Eukaryotic translation initiation factor 3 subunit F-2 (Drosophila ananassae (Fruit fly)).